The primary structure comprises 895 residues: Protein translocase subunit SecA (895 aa).

ATP-binding positions include glutamine 86, 104-108, and aspartate 494; that span reads GEGKT. Low complexity-rich tracts occupy residues 838-849 and 870-882; these read AAATPPGFGAPP and GDAA…TGNR. A disordered region spans residues 838–895; that stretch reads AAATPPGFGAPPVRQQLQYSAPTAEGDVEVHAGDAAATDADTGNRAQRRANQRQQREV.

It belongs to the SecA family. As to quaternary structure, monomer and homodimer. Part of the essential Sec protein translocation apparatus which comprises SecA, SecYEG and auxiliary proteins SecDF. Other proteins may also be involved.

The protein localises to the cell membrane. The protein resides in the cytoplasm. It catalyses the reaction ATP + H2O + cellular proteinSide 1 = ADP + phosphate + cellular proteinSide 2.. In terms of biological role, part of the Sec protein translocase complex. Interacts with the SecYEG preprotein conducting channel. Has a central role in coupling the hydrolysis of ATP to the transfer of proteins into and across the cell membrane, serving as an ATP-driven molecular motor driving the stepwise translocation of polypeptide chains across the membrane. This chain is Protein translocase subunit SecA, found in Kineococcus radiotolerans (strain ATCC BAA-149 / DSM 14245 / SRS30216).